The sequence spans 595 residues: Probable hydrolase M10 (595 aa).

A signal peptide spans M1–T23. N-linked (GlcNAc...) asparagine glycans are attached at residues N59, N87, N266, N436, N457, and N561.

Belongs to the beta-lactamase family.

The protein operates within secondary metabolite biosynthesis. In terms of biological role, probable hydrolase; part of the gene cluster that mediates the biosynthesis of squalestatin S1 (SQS1, also known as zaragozic acid A), a heavily oxidized fungal polyketide that offers potent cholesterol lowering activity by targeting squalene synthase (SS). SQS1 is composed of a 2,8-dioxobicyclic[3.2.1]octane-3,4,5-tricarboxyclic acid core that is connected to two lipophilic polyketide arms. These initial steps feature the priming of an unusual benzoic acid starter unit onto the highly reducing polyketide synthase pks2, followed by oxaloacetate extension and product release to generate a tricarboxylic acid containing product. The phenylalanine ammonia lyase (PAL) M7 and the acyl-CoA ligase M9 are involved in transforming phenylalanine into benzoyl-CoA. The citrate synthase-like protein R3 is involved in connecting the C-alpha-carbons of the hexaketide chain and oxaloacetate to afford the tricarboxylic acid unit. The potential hydrolytic enzymes, M8 and M10, are in close proximity to pks2 and may participate in product release. On the other side, the tetraketide arm is synthesized by a the squalestatin tetraketide synthase pks1 and enzymatically esterified to the core in the last biosynthetic step, by the acetyltransferase M4. The biosynthesis of the tetraketide must involve 3 rounds of chain extension. After the first and second rounds methyl-transfer occurs, and in all rounds of extension the ketoreductase and dehydratase are active. The enoyl reductase and C-MeT of pks1 are not active in the final round of extension. The acetyltransferase M4 appears to have a broad substrate selectivity for its acyl CoA substrate, allowing the in vitro synthesis of novel squalestatins. The biosynthesis of SQS1 requires several oxidative steps likely performed by oxidoreductases M1, R1 and R2. Finally, in support of the identification of the cluster as being responsible for SQS1 production, the cluster contains a gene encoding a putative squalene synthase (SS) R6, suggesting a likely mechanism for self-resistance. This chain is Probable hydrolase M10, found in Phoma sp. (strain ATCC 20986 / MF5453).